The chain runs to 376 residues: N,N'-diacetylbacillosaminyl-diphospho-undecaprenol alpha-1,3-N-acetylgalactosaminyltransferase (376 aa).

Belongs to the glycosyltransferase group 1 family.

It carries out the reaction N,N'-diacetyl-alpha-D-bacillosaminyl-tri-trans,hepta-cis-undecaprenyl diphosphate + UDP-N-acetyl-alpha-D-galactosamine = N-acetyl-alpha-D-galactosaminyl-(1-&gt;3)-N,N'-diacetyl-alpha-D-bacillosaminyl-tri-trans,hepta-cis-undecaprenyl diphosphate + UDP + H(+). It participates in protein modification; protein glycosylation. Functionally, adds the first GalNAc residue on to the isoprenoid-linked bacillosamine (2,4-diacetamido-2,4,6-trideoxyglucose) carrier in the N-linked protein glycosylation pathway. Acts first on the undecaprenylpyrophosphate-linked bacillosamine (Und-PP-Bac) substrate to yield the disaccharide. This Campylobacter jejuni subsp. jejuni serotype O:2 (strain ATCC 700819 / NCTC 11168) protein is N,N'-diacetylbacillosaminyl-diphospho-undecaprenol alpha-1,3-N-acetylgalactosaminyltransferase (pglA).